The primary structure comprises 1097 residues: Putative regulator of nonsense transcripts 1 (1097 aa).

The segment covering 42 to 53 (SQTQTQGHTQSQ) has biased composition (low complexity). Residues 42–67 (SQTQTQGHTQSQLDNQLNGPDDGLHN) form a disordered region. The 159-residue stretch at 96-254 (TKDLPVHACR…NKLEELWKDN (159 aa)) folds into the Upf1 CH-rich domain. Positions 104, 108, 119, 122, 127, 137, 141, 147, 165, 168, 191, and 195 each coordinate Zn(2+). The segment at 104–137 (CRSYCGIHDPACVVYCNTSKKWFCNGRGNTSGSH) is C3H. Positions 119-147 (CNTSKKWFCNGRGNTSGSHIVNHLVRAKC) are CC/SHH/C. The segment at 165–195 (CYNCGCRNVFLLGFIPAKADSVVVLLCRQPC) is C4. ATP is bound by residues Gln457, 474–481 (GPPGTGKT), Tyr683, and Glu813. Residues 977-998 (QGQTNGPAAGRGAMKGKSGRGG) are disordered.

Belongs to the DNA2/NAM7 helicase family.

The protein localises to the cytoplasm. The protein resides in the P-body. It catalyses the reaction ATP + H2O = ADP + phosphate + H(+). Functionally, RNA-dependent helicase required for nonsense-mediated decay (NMD) of aberrant mRNAs containing premature stop codons and modulates the expression level of normal mRNAs. The formation of an rent1-rent2-rent3 surveillance complex is believed to activate NMD. The polypeptide is Putative regulator of nonsense transcripts 1 (rent1) (Takifugu rubripes (Japanese pufferfish)).